Here is an 886-residue protein sequence, read N- to C-terminus: DNA mismatch repair protein MutS (886 aa).

Position 641-648 (641-648 (GPNMAGKS)) interacts with ATP.

This sequence belongs to the DNA mismatch repair MutS family.

In terms of biological role, this protein is involved in the repair of mismatches in DNA. It is possible that it carries out the mismatch recognition step. This protein has a weak ATPase activity. The sequence is that of DNA mismatch repair protein MutS from Rickettsia felis (strain ATCC VR-1525 / URRWXCal2) (Rickettsia azadi).